Reading from the N-terminus, the 51-residue chain is Protein Tat (51 aa).

Residues 1–25 (EAETATKSCSGRQANQVSLPKQPAS) are compositionally biased toward polar residues. The disordered stretch occupies residues 1 to 51 (EAETATKSCSGRQANQVSLPKQPASQPRGDPTGPKESKKKVETETETDPVN). Residue Lys-21 forms a Glycyl lysine isopeptide (Lys-Gly) (interchain with G-Cter in ubiquitin) linkage. The short motif at 28-30 (RGD) is the Cell attachment site element. A compositionally biased stretch (basic and acidic residues) spans 33–43 (GPKESKKKVET).

Belongs to the lentiviruses Tat family. In terms of assembly, interacts with host CCNT1. Associates with the P-TEFb complex composed at least of Tat, P-TEFb (CDK9 and CCNT1), TAR RNA, RNA Pol II. Recruits the HATs CREBBP, TAF1/TFIID, EP300, PCAF and GCN5L2. Interacts with host KAT5/Tip60; this interaction targets the latter to degradation. Interacts with the host deacetylase SIRT1. Interacts with host capping enzyme RNGTT; this interaction stimulates RNGTT. Binds to host KDR, and to the host integrins ITGAV/ITGB3 and ITGA5/ITGB1. Interacts with host KPNB1/importin beta-1 without previous binding to KPNA1/importin alpha-1. Interacts with EIF2AK2. Interacts with host nucleosome assembly protein NAP1L1; this interaction may be required for the transport of Tat within the nucleus, since the two proteins interact at the nuclear rim. Interacts with host C1QBP/SF2P32; this interaction involves lysine-acetylated Tat. Interacts with the host chemokine receptors CCR2, CCR3 and CXCR4. Interacts with host DPP4/CD26; this interaction may trigger an anti-proliferative effect. Interacts with host LDLR. Interacts with the host extracellular matrix metalloproteinase MMP1. Interacts with host PRMT6; this interaction mediates Tat's methylation. Interacts with, and is ubiquitinated by MDM2/Hdm2. Interacts with host PSMC3 and HTATIP2. Interacts with STAB1; this interaction may overcome SATB1-mediated repression of IL2 and IL2RA (interleukin) in T cells by binding to the same domain than HDAC1. Interacts (when acetylated) with human CDK13, thereby increasing HIV-1 mRNA splicing and promoting the production of the doubly spliced HIV-1 protein Nef. Post-translationally, acetylation by EP300, CREBBP, GCN5L2/GCN5 and PCAF regulates the transactivation activity of Tat. Phosphorylated by EIF2AK2 on serine and threonine residues adjacent to the basic region important for TAR RNA binding and function. Phosphorylation of Tat by EIF2AK2 is dependent on the prior activation of EIF2AK2 by dsRNA. In terms of processing, asymmetrical arginine methylation by host PRMT6 seems to diminish the transactivation capacity of Tat and affects the interaction with host CCNT1. Post-translationally, polyubiquitination by MDM2 does not target Tat to degradation, but activates its transactivation function and fosters interaction with CCNT1 and TAR RNA.

Its subcellular location is the host nucleus. The protein localises to the host nucleolus. The protein resides in the host cytoplasm. It is found in the secreted. Functionally, transcriptional activator that increases RNA Pol II processivity, thereby increasing the level of full-length viral transcripts. Recognizes a hairpin structure at the 5'-LTR of the nascent viral mRNAs referred to as the transactivation responsive RNA element (TAR) and recruits the cyclin T1-CDK9 complex (P-TEFb complex) that will in turn hyperphosphorylate the RNA polymerase II to allow efficient elongation. The CDK9 component of P-TEFb and other Tat-activated kinases hyperphosphorylate the C-terminus of RNA Pol II that becomes stabilized and much more processive. Other factors such as HTATSF1/Tat-SF1, SUPT5H/SPT5, and HTATIP2 are also important for Tat's function. Besides its effect on RNA Pol II processivity, Tat induces chromatin remodeling of proviral genes by recruiting the histone acetyltransferases (HATs) CREBBP, EP300 and PCAF to the chromatin. This also contributes to the increase in proviral transcription rate, especially when the provirus integrates in transcriptionally silent region of the host genome. To ensure maximal activation of the LTR, Tat mediates nuclear translocation of NF-kappa-B by interacting with host RELA. Through its interaction with host TBP, Tat may also modulate transcription initiation. Tat can reactivate a latently infected cell by penetrating in it and transactivating its LTR promoter. In the cytoplasm, Tat is thought to act as a translational activator of HIV-1 mRNAs. In terms of biological role, extracellular circulating Tat can be endocytosed by surrounding uninfected cells via the binding to several surface receptors such as CD26, CXCR4, heparan sulfate proteoglycans (HSPG) or LDLR. Neurons are rarely infected, but they internalize Tat via their LDLR. Endosomal low pH allows Tat to cross the endosome membrane to enter the cytosol and eventually further translocate into the nucleus, thereby inducing severe cell dysfunctions ranging from cell activation to cell death. Through its interaction with nuclear HATs, Tat is potentially able to control the acetylation-dependent cellular gene expression. Tat seems to inhibit the HAT activity of KAT5/Tip60 and TAF1, and consequently modify the expression of specific cellular genes. Modulates the expression of many cellular genes involved in cell survival, proliferation or in coding for cytokines (such as IL10) or cytokine receptors. May be involved in the derepression of host interleukin IL2 expression. Mediates the activation of cyclin-dependent kinases and dysregulation of microtubule network. Tat plays a role in T-cell and neurons apoptosis. Tat induced neurotoxicity and apoptosis probably contribute to neuroAIDS. Host extracellular matrix metalloproteinase MMP1 cleaves Tat and decreases Tat's mediated neurotoxicity. Circulating Tat also acts as a chemokine-like and/or growth factor-like molecule that binds to specific receptors on the surface of the cells, affecting many cellular pathways. In the vascular system, Tat binds to ITGAV/ITGB3 and ITGA5/ITGB1 integrins dimers at the surface of endothelial cells and competes with bFGF for heparin-binding sites, leading to an excess of soluble bFGF. Binds to KDR/VEGFR-2. All these Tat-mediated effects enhance angiogenesis in Kaposi's sarcoma lesions. The chain is Protein Tat from Homo sapiens (Human).